We begin with the raw amino-acid sequence, 334 residues long: Holliday junction branch migration complex subunit RuvB (334 aa).

Positions 4 to 184 (ADRIISASPK…FGIVQRLEFY (181 aa)) are large ATPase domain (RuvB-L). Residues Ile-23, Arg-24, Gly-65, Lys-68, Thr-69, Thr-70, 131–133 (EDY), Arg-174, Tyr-184, and Arg-221 each bind ATP. Residue Thr-69 coordinates Mg(2+). A small ATPAse domain (RuvB-S) region spans residues 185-255 (SVDDLTSIVK…IAKQALAMLD (71 aa)). Residues 258–334 (SEGFDFMDIK…YAHLGIAKLD (77 aa)) form a head domain (RuvB-H) region. DNA is bound by residues Arg-294, Arg-313, and Arg-318.

It belongs to the RuvB family. Homohexamer. Forms an RuvA(8)-RuvB(12)-Holliday junction (HJ) complex. HJ DNA is sandwiched between 2 RuvA tetramers; dsDNA enters through RuvA and exits via RuvB. An RuvB hexamer assembles on each DNA strand where it exits the tetramer. Each RuvB hexamer is contacted by two RuvA subunits (via domain III) on 2 adjacent RuvB subunits; this complex drives branch migration. In the full resolvosome a probable DNA-RuvA(4)-RuvB(12)-RuvC(2) complex forms which resolves the HJ.

It is found in the cytoplasm. The catalysed reaction is ATP + H2O = ADP + phosphate + H(+). The RuvA-RuvB-RuvC complex processes Holliday junction (HJ) DNA during genetic recombination and DNA repair, while the RuvA-RuvB complex plays an important role in the rescue of blocked DNA replication forks via replication fork reversal (RFR). RuvA specifically binds to HJ cruciform DNA, conferring on it an open structure. The RuvB hexamer acts as an ATP-dependent pump, pulling dsDNA into and through the RuvAB complex. RuvB forms 2 homohexamers on either side of HJ DNA bound by 1 or 2 RuvA tetramers; 4 subunits per hexamer contact DNA at a time. Coordinated motions by a converter formed by DNA-disengaged RuvB subunits stimulates ATP hydrolysis and nucleotide exchange. Immobilization of the converter enables RuvB to convert the ATP-contained energy into a lever motion, pulling 2 nucleotides of DNA out of the RuvA tetramer per ATP hydrolyzed, thus driving DNA branch migration. The RuvB motors rotate together with the DNA substrate, which together with the progressing nucleotide cycle form the mechanistic basis for DNA recombination by continuous HJ branch migration. Branch migration allows RuvC to scan DNA until it finds its consensus sequence, where it cleaves and resolves cruciform DNA. This is Holliday junction branch migration complex subunit RuvB from Actinobacillus pleuropneumoniae serotype 5b (strain L20).